We begin with the raw amino-acid sequence, 322 residues long: Ribonuclease Z (322 aa).

Residues histidine 60, histidine 62, aspartate 64, histidine 65, histidine 140, aspartate 210, and histidine 270 each coordinate Zn(2+). Aspartate 64 serves as the catalytic Proton acceptor.

The protein belongs to the RNase Z family. As to quaternary structure, homodimer. Requires Zn(2+) as cofactor.

The catalysed reaction is Endonucleolytic cleavage of RNA, removing extra 3' nucleotides from tRNA precursor, generating 3' termini of tRNAs. A 3'-hydroxy group is left at the tRNA terminus and a 5'-phosphoryl group is left at the trailer molecule.. Functionally, zinc phosphodiesterase, which displays some tRNA 3'-processing endonuclease activity. Probably involved in tRNA maturation, by removing a 3'-trailer from precursor tRNA. This Methanococcus aeolicus (strain ATCC BAA-1280 / DSM 17508 / OCM 812 / Nankai-3) protein is Ribonuclease Z.